The sequence spans 334 residues: MTPAVFLVILCFGVASGAPARDPNLDAEWQDWKTKYAKSYSPVEEELKRAVWEENLKMIQLHNKENGLGKNGFTMEMNAFADTTGEEFRKSLSDILIPAAVTNPSAQKQVSIGLPNFKDWRKEGYVTPVRNQGKCGSCWAFAAVGAIEGQMFSKTGNLTPLSVQNLLDCSKSEGNNGCRWGTAHQAFNYVLKNKGLEAEATYPYEGKDGPCRYHSENASANITGFVNLPPNELYLWVAVASIGPVSAAIDASHDSFRFYSGGVYHEPNCSSYVVNHAVLVVGYGFEGNETDGNNYWLIKNSWGEEWGINGFMKIAKDRNNHCGIASQASFPDIF.

A signal peptide spans 1-17 (MTPAVFLVILCFGVASG). The propeptide at 18 to 113 (APARDPNLDA…PSAQKQVSIG (96 aa)) is activation peptide. Cysteine 138 is a catalytic residue. N-linked (GlcNAc...) asparagine glycans are attached at residues asparagine 217, asparagine 221, and asparagine 268. Cysteine 269 and cysteine 322 are disulfide-bonded. Histidine 276 is an active-site residue. N-linked (GlcNAc...) asparagine glycosylation occurs at asparagine 288. Residue asparagine 300 is part of the active site.

This sequence belongs to the peptidase C1 family. As to expression, expressed specifically in placenta.

It is found in the lysosome. The protein is Cathepsin J (Ctsj) of Rattus norvegicus (Rat).